Here is a 154-residue protein sequence, read N- to C-terminus: Aspartate 1-decarboxylase 1 (154 aa).

The Schiff-base intermediate with substrate; via pyruvic acid role is filled by serine 26. The residue at position 26 (serine 26) is a Pyruvic acid (Ser). Threonine 58 is a substrate binding site. The active-site Proton donor is tyrosine 59. Position 74 to 76 (74 to 76) interacts with substrate; that stretch reads GAA. The interval 129–154 is disordered; sequence VGLVRGDTNSPQPSLSEQAGDPRRAQ. Over residues 135–145 the composition is skewed to polar residues; that stretch reads DTNSPQPSLSE.

The protein belongs to the PanD family. In terms of assembly, heterooctamer of four alpha and four beta subunits. The cofactor is pyruvate. In terms of processing, is synthesized initially as an inactive proenzyme, which is activated by self-cleavage at a specific serine bond to produce a beta-subunit with a hydroxyl group at its C-terminus and an alpha-subunit with a pyruvoyl group at its N-terminus.

It is found in the cytoplasm. The enzyme catalyses L-aspartate + H(+) = beta-alanine + CO2. It functions in the pathway cofactor biosynthesis; (R)-pantothenate biosynthesis; beta-alanine from L-aspartate: step 1/1. In terms of biological role, catalyzes the pyruvoyl-dependent decarboxylation of aspartate to produce beta-alanine. This is Aspartate 1-decarboxylase 1 from Frankia casuarinae (strain DSM 45818 / CECT 9043 / HFP020203 / CcI3).